The following is a 304-amino-acid chain: 4-diphosphocytidyl-2-C-methyl-D-erythritol kinase (304 aa).

The active site involves lysine 20. 106 to 116 (PVASGIGGGSG) serves as a coordination point for ATP. The active site involves aspartate 148.

It belongs to the GHMP kinase family. IspE subfamily.

It catalyses the reaction 4-CDP-2-C-methyl-D-erythritol + ATP = 4-CDP-2-C-methyl-D-erythritol 2-phosphate + ADP + H(+). Its pathway is isoprenoid biosynthesis; isopentenyl diphosphate biosynthesis via DXP pathway; isopentenyl diphosphate from 1-deoxy-D-xylulose 5-phosphate: step 3/6. Functionally, catalyzes the phosphorylation of the position 2 hydroxy group of 4-diphosphocytidyl-2C-methyl-D-erythritol. The sequence is that of 4-diphosphocytidyl-2-C-methyl-D-erythritol kinase from Bartonella bacilliformis (strain ATCC 35685 / KC583 / Herrer 020/F12,63).